The primary structure comprises 289 residues: Secretory carrier-associated membrane protein (289 aa).

The segment at 1–65 (MAGRYDPNPF…TSTDGKKKER (65 aa)) is disordered. Residues 1 to 123 (MAGRYDPNPF…EIPIHLRTLQ (123 aa)) are Cytoplasmic-facing. Polar residues predominate over residues 16 to 31 (NPFSNPRSAASATNSR). The stretch at 59–98 (DGKKKERDLQAKEAELRKREQEVRRKEEAIARAGIVIEEK) forms a coiled coil. 4 helical membrane-spanning segments follow: residues 124–144 (YVAFFSLLGLVLCLTWNVVSV), 156–176 (IWFLAIIYFIAGVPGAYALWY), 191–211 (FGWFFMFYLLHIGFCILAAVA), and 239–259 (IFYFIGFGFFCLETLISIWVI). At 260–289 (QQVYMHFRGGGKTAEMKREAALGAMGAALR) the chain is on the cytoplasmic side.

The protein belongs to the SCAMP family.

Its subcellular location is the cell membrane. It localises to the cytoplasmic vesicle. The protein localises to the secretory vesicle membrane. In terms of biological role, probably involved in membrane trafficking. The protein is Secretory carrier-associated membrane protein (PSAM2) of Pisum sativum (Garden pea).